The following is an 855-amino-acid chain: Inactive rhomboid protein 1 (855 aa).

Topologically, residues 1–411 (MSEARRDSTS…HRPFFTYWLT (411 aa)) are cytoplasmic. Phosphoserine is present on residues Ser76 and Ser176. Residues Thr180 and Thr183 each carry the phosphothreonine modification. At Ser390 the chain carries Phosphoserine. A helical transmembrane segment spans residues 412-432 (FVHSLVTILAVCIYGIAPVGF). The Lumenal segment spans residues 433–655 (SQHETVDSVL…NPEVPDQFYR (223 aa)). Asn583 carries an N-linked (GlcNAc...) asparagine glycan. The chain crosses the membrane as a helical span at residues 656-676 (LWLSLFLHAGILHCLVSICFQ). Residues 677–691 (MTVLRDLEKLAGWHR) lie on the Cytoplasmic side of the membrane. A helical membrane pass occupies residues 692–712 (IAIIYLLSGVTGNLASAIFLP). Residues 713–714 (YR) lie on the Lumenal side of the membrane. The helical transmembrane segment at 715 to 735 (AEVGPAGSQFGILACLFVELF) threads the bilayer. Topologically, residues 736–746 (QSWQILARPWR) are cytoplasmic. The helical transmembrane segment at 747-767 (AFFKLLAVVLFLFTFGLLPWI) threads the bilayer. Topologically, residues 768–772 (DNFAH) are lumenal. Residues 773 to 793 (ISGFISGLFLSFAFLPYISFG) traverse the membrane as a helical segment. The Cytoplasmic segment spans residues 794–803 (KFDLYRKRCQ). A helical membrane pass occupies residues 804 to 824 (IIIFQVVFLGLLAGLVVLFYV). The Lumenal portion of the chain corresponds to 825 to 855 (YPVRCEWCEFLTCIPFTDKFCEKYELDAQLH).

Belongs to the peptidase S54 family. Homodimer, or homooligomer. Interacts with TGFA and HBEGF. Interacts with EGF; may retain EGF in the endoplasmic reticulum and regulates its degradation through the endoplasmic reticulum-associated degradation (ERAD). Interacts (via cytoplasmic N-terminus) with FRMD8/iTAP; this interaction leads to mutual protein stabilization. Interacts with ADAM17/TACE. N-glycosylated. As to expression, highly expressed in cerebellum, cerebrum, heart, skeletal muscle, placenta, pancreatic islet and testis. Detected at lower levels in colon, kidney, small intestine and lung.

The protein localises to the endoplasmic reticulum membrane. It localises to the golgi apparatus membrane. Functionally, regulates ADAM17 protease, a sheddase of the epidermal growth factor (EGF) receptor ligands and TNF, thereby plays a role in sleep, cell survival, proliferation, migration and inflammation. Does not exhibit any protease activity on its own. The chain is Inactive rhomboid protein 1 (RHBDF1) from Homo sapiens (Human).